The primary structure comprises 246 residues: Thaumatin-like protein 1 (246 aa).

The signal sequence occupies residues 1 to 24; sequence MMKSQAALLGLTTLAILFFSGAHA. Cystine bridges form between Cys-33–Cys-245, Cys-81–Cys-91, Cys-96–Cys-103, Cys-151–Cys-234, Cys-156–Cys-217, Cys-164–Cys-180, Cys-184–Cys-193, and Cys-194–Cys-204.

The protein belongs to the thaumatin family. Equally expressed in the abscission zone and surrounding tissues of both fruitlets and leaves.

The protein resides in the secreted. Functionally, may be involved in protecting plant tissues from pathogen infection. The chain is Thaumatin-like protein 1 from Prunus persica (Peach).